A 637-amino-acid chain; its full sequence is Chaperone protein DnaK (637 aa).

T198 carries the phosphothreonine; by autocatalysis modification. The disordered stretch occupies residues 600-637 (IAQQQAQAQQAQGADAGAQSKDDDVVDAEFEEVKDDKK). Residues 601–618 (AQQQAQAQQAQGADAGAQ) show a composition bias toward low complexity. The segment covering 623-637 (DVVDAEFEEVKDDKK) has biased composition (acidic residues).

Belongs to the heat shock protein 70 family.

Functionally, acts as a chaperone. This chain is Chaperone protein DnaK, found in Vibrio parahaemolyticus serotype O3:K6 (strain RIMD 2210633).